A 131-amino-acid polypeptide reads, in one-letter code: Small ribosomal subunit protein bS6 (131 aa).

The segment at 97-131 (TEASPMVKAKDERRRDVAEDLDEEEVDDVAEDSEE) is disordered. Positions 104-114 (KAKDERRRDVA) are enriched in basic and acidic residues. A compositionally biased stretch (acidic residues) spans 115 to 131 (EDLDEEEVDDVAEDSEE).

It belongs to the bacterial ribosomal protein bS6 family.

Binds together with bS18 to 16S ribosomal RNA. The sequence is that of Small ribosomal subunit protein bS6 from Proteus mirabilis (strain HI4320).